Reading from the N-terminus, the 320-residue chain is Putative thiosulfate sulfurtransferase 2 (320 aa).

Rhodanese domains lie at 18-125 and 154-267; these read HAPK…PLSS and AINV…HACP. The active-site Cysteine persulfide intermediate is the Cys233. A substrate-binding site is contributed by Arg238.

The enzyme catalyses thiosulfate + hydrogen cyanide = thiocyanate + sulfite + 2 H(+). In terms of biological role, may be a sulfotransferase involved in the formation of thiosulfate. In Mycobacterium bovis (strain ATCC BAA-935 / AF2122/97), this protein is Putative thiosulfate sulfurtransferase 2 (cysA2).